Consider the following 149-residue polypeptide: UPF0336 protein CMM_2793 (149 aa).

Residues 16–117 (APYLVGREKV…TVTKVATLGG (102 aa)) enclose the MaoC-like domain.

Belongs to the UPF0336 family.

In Clavibacter michiganensis subsp. michiganensis (strain NCPPB 382), this protein is UPF0336 protein CMM_2793.